Consider the following 391-residue polypeptide: 3-ketoacyl-CoA thiolase (391 aa).

The active-site Acyl-thioester intermediate is C95. Active-site proton acceptor residues include H347 and C377.

The protein belongs to the thiolase-like superfamily. Thiolase family. In terms of assembly, heterotetramer of two alpha chains (FadB) and two beta chains (FadA).

Its subcellular location is the cytoplasm. The enzyme catalyses an acyl-CoA + acetyl-CoA = a 3-oxoacyl-CoA + CoA. It participates in lipid metabolism; fatty acid beta-oxidation. Its function is as follows. Catalyzes the final step of fatty acid oxidation in which acetyl-CoA is released and the CoA ester of a fatty acid two carbons shorter is formed. This Saccharophagus degradans (strain 2-40 / ATCC 43961 / DSM 17024) protein is 3-ketoacyl-CoA thiolase.